Consider the following 597-residue polypeptide: (E)-sabinene hydrate synthase, chloroplastic (597 aa).

The transit peptide at 1–47 directs the protein to the chloroplast; that stretch reads MSTISINHVGILRNPLQCKNKRTSINKPWSLSLPRSSPASRLVKPCR. Residues D353 and D357 each coordinate Mn(2+). The DDXXD motif motif lies at 353–357; that stretch reads DDVYD. Homodimerization stretches follow at residues 359-365 and 431-468; these read YGTLDEL and EAGW…VSLP. Mn(2+) contacts are provided by D495 and E503.

The protein belongs to the terpene synthase family. Homodimer. Mn(2+) is required as a cofactor. The cofactor is Mg(2+).

It localises to the plastid. The protein resides in the chloroplast. The catalysed reaction is (2E)-geranyl diphosphate + H2O = sabinene hydrate + diphosphate. It functions in the pathway secondary metabolite biosynthesis; terpenoid biosynthesis. Involved in the biosynthesis of phenolic monoterpenes natural products. Monoterpene synthase which catalyzes the conversion of geranyl diphosphate (GPP) to sabinene hydrate, specifically (E)-sabinene hydrate, and the formation of minor amounts and traces of several other monoterpenes (e.g. mainly alpha-pinene, limonene and alpha-terpineol). The chain is (E)-sabinene hydrate synthase, chloroplastic from Thymus vulgaris (Thyme).